We begin with the raw amino-acid sequence, 457 residues long: Variant surface glycoprotein 20 (457 aa).

A signal peptide spans 1-20 (MFTQAVIALIGLVSIRTGKT). The span at 385–397 (RQTASGDDQSAEN) shows a compositional bias: polar residues. The disordered stretch occupies residues 385-406 (RQTASGDDQSAENQCGGKKEDE). The N-linked (GlcNAc...) asparagine glycan is linked to Asn-436. Ser-440 is lipidated: GPI-anchor amidated serine. The propeptide at 441-457 (NSFVIKKAPLWLAFLLF) is removed in mature form.

It is found in the cell membrane. VSG forms a coat on the surface of the parasite. The trypanosome evades the immune response of the host by expressing a series of antigenically distinct VSGs from an estimated 1000 VSG genes. This Trypanosoma equiperdum protein is Variant surface glycoprotein 20.